We begin with the raw amino-acid sequence, 351 residues long: Adenine deaminase (351 aa).

Residues His-20, His-22, and His-200 each coordinate Zn(2+). Catalysis depends on Glu-203, which acts as the Proton donor. Asp-281 lines the Zn(2+) pocket. A substrate-binding site is contributed by Asp-282.

This sequence belongs to the metallo-dependent hydrolases superfamily. Adenosine and AMP deaminases family. Adenine deaminase type 2 subfamily. Zn(2+) serves as cofactor.

The enzyme catalyses adenine + H2O + H(+) = hypoxanthine + NH4(+). Its function is as follows. Catalyzes the hydrolytic deamination of adenine to hypoxanthine. Plays an important role in the purine salvage pathway and in nitrogen catabolism. The protein is Adenine deaminase of Cupriavidus taiwanensis (strain DSM 17343 / BCRC 17206 / CCUG 44338 / CIP 107171 / LMG 19424 / R1) (Ralstonia taiwanensis (strain LMG 19424)).